Consider the following 376-residue polypeptide: Ribonuclease D (376 aa).

The 3'-5' exonuclease domain maps to 8 to 176; it reads IQWIRDDASL…VYLALDARLS (169 aa). In terms of domain architecture, HRDC spans 214–294; it reads RPQQLAVLRE…AEAARLPQSE (81 aa).

Belongs to the RNase D family. A divalent metal cation serves as cofactor.

The protein resides in the cytoplasm. It carries out the reaction Exonucleolytic cleavage that removes extra residues from the 3'-terminus of tRNA to produce 5'-mononucleotides.. Its function is as follows. Exonuclease involved in the 3' processing of various precursor tRNAs. Initiates hydrolysis at the 3'-terminus of an RNA molecule and releases 5'-mononucleotides. The polypeptide is Ribonuclease D (Pseudomonas paraeruginosa (strain DSM 24068 / PA7) (Pseudomonas aeruginosa (strain PA7))).